A 49-amino-acid chain; its full sequence is Small ribosomal subunit protein uS14B (49 aa).

It belongs to the universal ribosomal protein uS14 family. Zinc-binding uS14 subfamily. In terms of assembly, part of the 30S ribosomal subunit.

Binds 16S rRNA, required for the assembly of 30S particles. The sequence is that of Small ribosomal subunit protein uS14B from Natronomonas pharaonis (strain ATCC 35678 / DSM 2160 / CIP 103997 / JCM 8858 / NBRC 14720 / NCIMB 2260 / Gabara) (Halobacterium pharaonis).